The chain runs to 192 residues: Adenylate kinase (192 aa).

An ATP-binding site is contributed by Gly-11–Thr-16. The NMP stretch occupies residues Ser-31–Val-60. Residues Thr-32, Arg-37, Asp-58–Val-60, Gly-86–Arg-89, and Gln-93 contribute to the AMP site. Positions Gly-127–Asp-137 are LID. Arg-128 contacts ATP. 2 residues coordinate AMP: Arg-134 and Arg-145. ATP is bound at residue Gly-173.

It belongs to the adenylate kinase family. Monomer.

Its subcellular location is the cytoplasm. It catalyses the reaction AMP + ATP = 2 ADP. Its pathway is purine metabolism; AMP biosynthesis via salvage pathway; AMP from ADP: step 1/1. Its function is as follows. Catalyzes the reversible transfer of the terminal phosphate group between ATP and AMP. Plays an important role in cellular energy homeostasis and in adenine nucleotide metabolism. The chain is Adenylate kinase from Pseudarthrobacter chlorophenolicus (strain ATCC 700700 / DSM 12829 / CIP 107037 / JCM 12360 / KCTC 9906 / NCIMB 13794 / A6) (Arthrobacter chlorophenolicus).